Here is a 345-residue protein sequence, read N- to C-terminus: Probable aldo-keto reductase 3 (345 aa).

The active-site Proton donor is the Tyr63. Position 130 (His130) interacts with substrate. Position 209–219 (209–219 (SPLGRGFFASG)) interacts with NADP(+).

The protein belongs to the aldo/keto reductase family.

In Arabidopsis thaliana (Mouse-ear cress), this protein is Probable aldo-keto reductase 3.